The chain runs to 1045 residues: Fibrosin-1-like protein (1045 aa).

Positions 1–12 (MEAKVRPSRRSR) are enriched in basic residues. Disordered regions lie at residues 1 to 86 (MEAK…DGFA) and 99 to 315 (DMAL…THVP). Residues 13-28 (AQRDRGRRREAARDAR) are compositionally biased toward basic and acidic residues. A compositionally biased stretch (low complexity) spans 48–63 (GLRGAPPRGAAPAPRT). Residues 99–123 (DMALKPHERKEKWERRLIKKPRESE) are compositionally biased toward basic and acidic residues. Over residues 183 to 197 (EATSSRDPLSDSSAH) the composition is skewed to polar residues. Pro residues predominate over residues 270–280 (HAAPCPGPPPG). Ser-340 carries the post-translational modification Phosphoserine. The span at 443–457 (QHTHQHTHQHTHQHQ) shows a compositional bias: basic residues. 2 disordered regions span residues 443-462 (QHTH…TFAP) and 719-753 (EGSS…PKSV). Over residues 741-750 (PSFPAPPPWP) the composition is skewed to pro residues. A Phosphoserine modification is found at Ser-790. Disordered stretches follow at residues 809–880 (ELGR…APLQ) and 910–961 (AAAP…PALD). Residues 817–837 (AEREAEPRVKESRSPAKEEAA) are compositionally biased toward basic and acidic residues. Lys-858 participates in a covalent cross-link: Glycyl lysine isopeptide (Lys-Gly) (interchain with G-Cter in SUMO2). The span at 910-922 (AAAPAPGSAALLE) shows a compositional bias: low complexity. A compositionally biased stretch (basic and acidic residues) spans 923 to 949 (PPERPYRDREPHGYSPERLRGELERAR). Phosphoserine is present on residues Ser-937 and Ser-977. 2 positions are modified to phosphothreonine: Thr-989 and Thr-1010. The tract at residues 991-1045 (PAAAALGAPPPLVTAAGPPTPPGPPRSRTTPLGGLGPGEARDYSPSRNPPEVEAR) is disordered. Over residues 998–1015 (APPPLVTAAGPPTPPGPP) the composition is skewed to pro residues. The segment covering 1029-1045 (EARDYSPSRNPPEVEAR) has biased composition (basic and acidic residues).

The protein belongs to the AUTS2 family.

This is Fibrosin-1-like protein (FBRSL1) from Homo sapiens (Human).